A 260-amino-acid chain; its full sequence is DNA repair protein RecO (260 aa).

Belongs to the RecO family.

Functionally, involved in DNA repair and RecF pathway recombination. The polypeptide is DNA repair protein RecO (Desulfosudis oleivorans (strain DSM 6200 / JCM 39069 / Hxd3) (Desulfococcus oleovorans)).